The following is an 82-amino-acid chain: RNA-binding protein Hfq (82 aa).

Positions 9-69 (DHFLNQLRKE…ISTFSPARNV (61 aa)) constitute a Sm domain.

This sequence belongs to the Hfq family. In terms of assembly, homohexamer.

RNA chaperone that binds small regulatory RNA (sRNAs) and mRNAs to facilitate mRNA translational regulation in response to envelope stress, environmental stress and changes in metabolite concentrations. Also binds with high specificity to tRNAs. This chain is RNA-binding protein Hfq, found in Exiguobacterium sp. (strain ATCC BAA-1283 / AT1b).